Reading from the N-terminus, the 426-residue chain is 3-phosphoshikimate 1-carboxyvinyltransferase (426 aa).

3-phosphoshikimate contacts are provided by Lys22, Ser23, and Arg27. Lys22 provides a ligand contact to phosphoenolpyruvate. Positions 96 and 124 each coordinate phosphoenolpyruvate. Ser170, Ser171, Gln172, Ser198, Asp314, Asn337, and Lys341 together coordinate 3-phosphoshikimate. Gln172 lines the phosphoenolpyruvate pocket. Residue Asp314 is the Proton acceptor of the active site. Phosphoenolpyruvate is bound by residues Arg345, Arg387, and Lys412.

This sequence belongs to the EPSP synthase family. Monomer.

It localises to the cytoplasm. It carries out the reaction 3-phosphoshikimate + phosphoenolpyruvate = 5-O-(1-carboxyvinyl)-3-phosphoshikimate + phosphate. Its pathway is metabolic intermediate biosynthesis; chorismate biosynthesis; chorismate from D-erythrose 4-phosphate and phosphoenolpyruvate: step 6/7. Its function is as follows. Catalyzes the transfer of the enolpyruvyl moiety of phosphoenolpyruvate (PEP) to the 5-hydroxyl of shikimate-3-phosphate (S3P) to produce enolpyruvyl shikimate-3-phosphate and inorganic phosphate. The chain is 3-phosphoshikimate 1-carboxyvinyltransferase from Shewanella loihica (strain ATCC BAA-1088 / PV-4).